Reading from the N-terminus, the 166-residue chain is 6,7-dimethyl-8-ribityllumazine synthase (166 aa).

5-amino-6-(D-ribitylamino)uracil is bound by residues phenylalanine 22, 56-58, and 80-82; these read SME and AVI. 85-86 contributes to the (2S)-2-hydroxy-3-oxobutyl phosphate binding site; the sequence is ET. Histidine 88 (proton donor) is an active-site residue. Phenylalanine 113 contributes to the 5-amino-6-(D-ribitylamino)uracil binding site. (2S)-2-hydroxy-3-oxobutyl phosphate is bound at residue arginine 127.

Belongs to the DMRL synthase family.

The catalysed reaction is (2S)-2-hydroxy-3-oxobutyl phosphate + 5-amino-6-(D-ribitylamino)uracil = 6,7-dimethyl-8-(1-D-ribityl)lumazine + phosphate + 2 H2O + H(+). Its pathway is cofactor biosynthesis; riboflavin biosynthesis; riboflavin from 2-hydroxy-3-oxobutyl phosphate and 5-amino-6-(D-ribitylamino)uracil: step 1/2. Functionally, catalyzes the formation of 6,7-dimethyl-8-ribityllumazine by condensation of 5-amino-6-(D-ribitylamino)uracil with 3,4-dihydroxy-2-butanone 4-phosphate. This is the penultimate step in the biosynthesis of riboflavin. The protein is 6,7-dimethyl-8-ribityllumazine synthase of Thermotoga neapolitana (strain ATCC 49049 / DSM 4359 / NBRC 107923 / NS-E).